The sequence spans 142 residues: Transcriptional regulator MraZ (142 aa).

2 SpoVT-AbrB domains span residues 5–51 (ASSL…PRPE) and 77–120 (AMDV…DKAS).

This sequence belongs to the MraZ family. In terms of assembly, forms oligomers.

Its subcellular location is the cytoplasm. It localises to the nucleoid. This chain is Transcriptional regulator MraZ, found in Verminephrobacter eiseniae (strain EF01-2).